Here is a 188-residue protein sequence, read N- to C-terminus: Putative manganese efflux pump MntP (188 aa).

The next 6 helical transmembrane spans lie at 3–23 (LFSL…VSIC), 39–59 (AGLY…LLGV), 65–85 (ITDY…VNML), 110–130 (LGFA…FLSV), 131–151 (DIYS…IIGV), and 167–187 (ILGG…HTLF).

It belongs to the MntP (TC 9.B.29) family.

It localises to the cell inner membrane. Its function is as follows. Probably functions as a manganese efflux pump. The chain is Putative manganese efflux pump MntP from Mannheimia succiniciproducens (strain KCTC 0769BP / MBEL55E).